The primary structure comprises 376 residues: Putative transmembrane protein 183BP (376 aa).

Disordered stretches follow at residues 1-20 (MARGPGPLGRPRPDTVAMPK) and 102-127 (AQEENIHERTVSRKKKSKRHKEELDG). Residues 300–320 (LNFIFIPIVMGMIFTLFTINV) traverse the membrane as a helical segment.

Belongs to the TMEM183 family. In terms of tissue distribution, expressed in brain, lung, pancreas, thymus, intestine and blood. Not detected in heart, placenta, liver, muscle, kidney, spleen, prostate, testis, ovary and colon.

It localises to the membrane. The sequence is that of Putative transmembrane protein 183BP from Homo sapiens (Human).